The sequence spans 512 residues: 2-isopropylmalate synthase (512 aa).

One can recognise a Pyruvate carboxyltransferase domain in the interval 5-268 (LIIFDTTLRD…DVDIETQHIL (264 aa)). The Mn(2+) site is built by aspartate 14, histidine 202, histidine 204, and asparagine 239. A regulatory domain region spans residues 394–512 (SFVSLSQHSE…SKADRVAAQG (119 aa)).

It belongs to the alpha-IPM synthase/homocitrate synthase family. LeuA type 1 subfamily. Homodimer. Mn(2+) is required as a cofactor.

It is found in the cytoplasm. It catalyses the reaction 3-methyl-2-oxobutanoate + acetyl-CoA + H2O = (2S)-2-isopropylmalate + CoA + H(+). The protein operates within amino-acid biosynthesis; L-leucine biosynthesis; L-leucine from 3-methyl-2-oxobutanoate: step 1/4. In terms of biological role, catalyzes the condensation of the acetyl group of acetyl-CoA with 3-methyl-2-oxobutanoate (2-ketoisovalerate) to form 3-carboxy-3-hydroxy-4-methylpentanoate (2-isopropylmalate). This chain is 2-isopropylmalate synthase, found in Albidiferax ferrireducens (strain ATCC BAA-621 / DSM 15236 / T118) (Rhodoferax ferrireducens).